The following is a 159-amino-acid chain: Small ribosomal subunit protein uS4 (159 aa).

In terms of domain architecture, S4 RNA-binding spans 106-158 (RRLQTIVYRMGLAKSIYHARQLIVHGHIAVAGRRVSSPGFLVPRELEDKISLI).

This sequence belongs to the universal ribosomal protein uS4 family. Part of the 30S ribosomal subunit. Contacts protein S5. The interaction surface between S4 and S5 is involved in control of translational fidelity.

Its function is as follows. One of the primary rRNA binding proteins, it binds directly to 16S rRNA where it nucleates assembly of the body of the 30S subunit. In terms of biological role, with S5 and S12 plays an important role in translational accuracy. This is Small ribosomal subunit protein uS4 from Pyrobaculum neutrophilum (strain DSM 2338 / JCM 9278 / NBRC 100436 / V24Sta) (Thermoproteus neutrophilus).